The following is a 262-amino-acid chain: Kallikrein-1 (262 aa).

The N-terminal stretch at 1–18 is a signal peptide; sequence MWFLVLCLALSLGGTGAA. The propeptide at 19–24 is activation peptide; that stretch reads PPIQSR. Residues 25–259 form the Peptidase S1 domain; it reads IVGGWECEQH…YVKWIEDTIA (235 aa). Disulfide bonds link C31–C174, C50–C66, C153–C220, C185–C199, and C210–C235. The Charge relay system role is filled by H65. The O-linked (GalNAc...) serine glycan is linked to S93. N102 carries an N-linked (GlcNAc...) asparagine glycan. S104 carries an O-linked (GalNAc...) serine glycan. N108 carries an N-linked (GlcNAc...) asparagine glycan. D120 (charge relay system) is an active-site residue. The N-linked (GlcNAc...) asparagine; partial glycan is linked to N165. A glycan (O-linked (GalNAc...) serine) is linked at S167. The active-site Charge relay system is the S214.

The protein belongs to the peptidase S1 family. Kallikrein subfamily. In terms of processing, the O-linked polysaccharides on Ser-93, Ser-104 and Ser-167 are probably the mucin type linked to GalNAc. In PubMed:3163150, GalNAc was detected with the corresponding peptides but not located. In terms of tissue distribution, isoform 2 is expressed in pancreas, salivary glands, kidney, colon, prostate gland, testis, spleen and the colon adenocarcinoma cell line T84.

It carries out the reaction Preferential cleavage of Arg-|-Xaa bonds in small molecule substrates. Highly selective action to release kallidin (lysyl-bradykinin) from kininogen involves hydrolysis of Met-|-Xaa or Leu-|-Xaa.. In terms of biological role, glandular kallikreins cleave Met-Lys and Arg-Ser bonds in kininogen to release Lys-bradykinin. Functionally, (Microbial infection) Cleaves Neisseria meningitidis NHBA in saliva; Neisseria is an obligate commensal of the nasopharyngeal mucosa. The sequence is that of Kallikrein-1 (KLK1) from Homo sapiens (Human).